A 293-amino-acid chain; its full sequence is Ribosomal protein L11 methyltransferase (293 aa).

4 residues coordinate S-adenosyl-L-methionine: T145, G166, D188, and N230.

This sequence belongs to the methyltransferase superfamily. PrmA family.

The protein resides in the cytoplasm. It carries out the reaction L-lysyl-[protein] + 3 S-adenosyl-L-methionine = N(6),N(6),N(6)-trimethyl-L-lysyl-[protein] + 3 S-adenosyl-L-homocysteine + 3 H(+). Its function is as follows. Methylates ribosomal protein L11. The polypeptide is Ribosomal protein L11 methyltransferase (Shewanella baltica (strain OS155 / ATCC BAA-1091)).